Here is a 144-residue protein sequence, read N- to C-terminus: Mediator of RNA polymerase II transcription subunit 21 (144 aa).

The protein belongs to the Mediator complex subunit 21 family. As to quaternary structure, component of the Mediator complex, which is composed of MED1, MED4, MED6, MED7, MED8, MED9, MED10, MED11, MED12, MED13, MED13L, MED14, MED15, MED16, MED17, MED18, MED19, MED20, MED21, MED22, MED23, MED24, MED25, MED26, MED27, MED29, MED30, MED31, CCNC, CDK8 and CDC2L6/CDK11. The MED12, MED13, CCNC and CDK8 subunits form a distinct module termed the CDK8 module. Mediator containing the CDK8 module is less active than Mediator lacking this module in supporting transcriptional activation. Individual preparations of the Mediator complex lacking one or more distinct subunits have been variously termed ARC, CRSP, DRIP, PC2, SMCC and TRAP. Interacts with PPARG. Interacts with THRA in a ligand-dependent fashion.

The protein localises to the nucleus. Its function is as follows. Component of the Mediator complex, a coactivator involved in the regulated transcription of nearly all RNA polymerase II-dependent genes. Mediator functions as a bridge to convey information from gene-specific regulatory proteins to the basal RNA polymerase II transcription machinery. Mediator is recruited to promoters by direct interactions with regulatory proteins and serves as a scaffold for the assembly of a functional preinitiation complex with RNA polymerase II and the general transcription factors. This chain is Mediator of RNA polymerase II transcription subunit 21 (MED21), found in Pongo abelii (Sumatran orangutan).